The sequence spans 429 residues: Adenylosuccinate synthetase (429 aa).

Residues 12–18 (GDEGKGK) and 40–42 (GHT) each bind GTP. Aspartate 13 (proton acceptor) is an active-site residue. Residues aspartate 13 and glycine 40 each contribute to the Mg(2+) site. Residues 13–16 (DEGK), 38–41 (NAGH), threonine 128, arginine 142, glutamine 224, threonine 239, and arginine 303 contribute to the IMP site. The active-site Proton donor is histidine 41. 299–305 (VTTGRPR) contacts substrate. GTP contacts are provided by residues arginine 305, 331–333 (LLD), and 413–415 (SVG).

The protein belongs to the adenylosuccinate synthetase family. As to quaternary structure, homodimer. It depends on Mg(2+) as a cofactor.

The protein localises to the cytoplasm. It catalyses the reaction IMP + L-aspartate + GTP = N(6)-(1,2-dicarboxyethyl)-AMP + GDP + phosphate + 2 H(+). It functions in the pathway purine metabolism; AMP biosynthesis via de novo pathway; AMP from IMP: step 1/2. Functionally, plays an important role in the de novo pathway of purine nucleotide biosynthesis. Catalyzes the first committed step in the biosynthesis of AMP from IMP. This chain is Adenylosuccinate synthetase, found in Clostridioides difficile (strain 630) (Peptoclostridium difficile).